The sequence spans 83 residues: MREDRLFARFVEYSFFAVFAALIVSYALDKLFGTSLSPLLVFLLTLIPAIGLILILPFSSRKTAILTVAVLIEMAVALYLAFR.

Transmembrane regions (helical) follow at residues 7–26, 36–58, and 65–82; these read FARF…IVSY, LSPL…ILPF, and ILTV…YLAF.

It localises to the cell membrane. This is an uncharacterized protein from Archaeoglobus fulgidus (strain ATCC 49558 / DSM 4304 / JCM 9628 / NBRC 100126 / VC-16).